The following is a 289-amino-acid chain: MSASVRTYLEIMRYENCLMAGFAAIIGTLIAFNILTSNAPSSYSPGEFPLFSSVLIFLAVFLVAGAGNAINDYFDVRIDSINRPDRPIPSGRMKLKEALYFSYTLFALGTLLAFSINPICGVIALFNSLVLIFYAKTLKGTPLLGNLSIGYLTGSSFLFGASVFGLEGLKALFVLFLLAALAITAREIVKDIEDMEGDKMEGADTLPLRVGAKKASYLAALIGFLAVIFSPLPYHLSMLGLRYLYLVLLADLGFLAAIYQLLARNNPTKSSKMFKIAMFFALIAFIAGV.

The next 8 helical transmembrane spans lie at 17 to 37, 50 to 70, 106 to 126, 141 to 161, 163 to 183, 221 to 241, 243 to 263, and 269 to 289; these read CLMA…ILTS, LFSS…GNAI, FALG…IALF, TPLL…LFGA, VFGL…ALAI, LIGF…MLGL, YLYL…QLLA, and KSSK…IAGV.

The protein belongs to the UbiA prenyltransferase family. DGGGP synthase subfamily. The cofactor is Mg(2+).

Its subcellular location is the cell membrane. It catalyses the reaction sn-3-O-(geranylgeranyl)glycerol 1-phosphate + (2E,6E,10E)-geranylgeranyl diphosphate = 2,3-bis-O-(geranylgeranyl)-sn-glycerol 1-phosphate + diphosphate. The protein operates within membrane lipid metabolism; glycerophospholipid metabolism. In terms of biological role, prenyltransferase that catalyzes the transfer of the geranylgeranyl moiety of geranylgeranyl diphosphate (GGPP) to the C2 hydroxyl of (S)-3-O-geranylgeranylglyceryl phosphate (GGGP). This reaction is the second ether-bond-formation step in the biosynthesis of archaeal membrane lipids. In Methanosarcina barkeri (strain Fusaro / DSM 804), this protein is Digeranylgeranylglyceryl phosphate synthase.